The chain runs to 1346 residues: MLATTHMLYVLIATCVIPIFGAALSKTVLYQAPDECRWSGGGEHDITLVCHLRTINSELENTNFSVIQPQNTVRLRLECNDALFFQSSLSPDSFRSLVELRDLTIEYCKLGNLTDGSFRGLQELRNLTIRTHNGDWSTMSLEMASNSFVEFRQLERLDLSLNNIWLIPDGMVCPLKSLQHLNASYNKIQDISNFYFSASLSSRKARVCGSTLQSLDLSANKMVSLPTAMLSALGRLTHLNMAKNSMSFLADRAFEGLLSLRVVDLSANRLTSLPPELFAETKQLQEIYLRNNSINVLAPGIFGELAELLVLDLASNELNSQWINAATFVGLKRLMMLDLSANKISRLEAHIFRPLASLQILKLEDNYIDQLPGGIFADLTNLHTLILSRNRISVIEQRTLQGLKNLLVLSLDFNRISRMDQRSLVNCSQLQDLHLNDNKLQAVPEALAHVQLLKTLDVGENMISQIENTSITQLESLYGLRMTENSLTHIRRGVFDRMSSLQILNLSQNKLKSIEAGSLQRNSQLQAIRLDGNQLKSIAGLFTELPNLVWLNISGNRLEKFDYSHIPIGLQWLDVRANRITQLGNYFEIESELSLSTFDASYNLLTEITASSIPNSVEVLYLNDNQISKIQPYTFFKKPNLTRVDLVRNRLTTLEPNALRLSPIAEDREIPEFYIGHNAYECDCNLDWLQKVNRESRTQPQLMDLDQIHCRLAYARGSSHVSLIEAKSDDFLCKYASHCFALCHCCDFQACDCKMECPDRCSCYHDQSWTSNVVDCSRASYEQTLPSHIPMDSTQLYLDGNNFRELQSHAFIGRKRLKVLHLNHSRIEVLHNRTFYGLLELEVLQLQSNQLKALNGNEFQGLDNLQELYLQHNAIATIDTLTFTHLYHLKILRLDHNAITSFAVWNFLPSYLNELRLASNPWTCSCEFIDKLRDYINRHEYVVDKLKMKCDVISGNSTQQMVIYPGSGEPASLPVVQCSQTLPLGLDNNFNYAEQAGGENASNATSTKMILNQPPKLDYIPILVAILTAFIFVMICISLVFIFRQEMRVWCHSRFGVRLFYNAQKDVDKNEREKLFDAFVSYSSKDELFVNEELAPMLEMGEHRYKLCLHQRDFPVGGYLPETIVQAIDSSRRTIMVVSENFIKSEWCRFEFKSAHQSVLRDRRRRLIVIVLGEVPQKELDPDLRLYLKTNTYLQWGDKLFWQKLRFALPDVSSSQRSNVAGQSCHVPINHASYHHHHHVHQQAMPLPHSVHHHQQQFMLPPPPQQPGSFRRQPSLHQQQQQQQQIRGNNNTTQQQQQQQAALLMGGGSVGGPAPQMIPLAGGIQQQSLPLPPNQQPTPASRNLHM.

An N-terminal signal peptide occupies residues 1 to 21; that stretch reads MLATTHMLYVLIATCVIPIFG. At 22-1021 the chain is on the extracellular side; it reads AALSKTVLYQ…NQPPKLDYIP (1000 aa). N-linked (GlcNAc...) asparagine glycans are attached at residues N63, N112, and N126. LRR repeat units follow at residues 97–120, 124–146, 151–174, 176–198, 209–232, 234–256, 257–280, 282–304, 306–330, 331–354, 355–378, 380–402, 404–426, 427–450, 452–473, 474–497, 498–521, 523–544, 546–568, 570–591, 593–614, 615–637, and 638–661; these read LVEL…SFRG, LRNL…MASN, FRQL…MVCP, KSLQ…YFSA, GSTL…MLSA, GRLT…AFEG, LLSL…LFAE, KQLQ…IFGE, AELL…TFVG, LKRL…IFRP, LASL…IFAD, TNLH…TLQG, KNLL…SLVN, CSQL…LAHV, LLKT…SITQ, LESL…VFDR, MSSL…SLQR, SQLQ…LFTE, PNLV…HIPI, LQWL…EIES, LSLS…SSIP, NSVE…TFFK, and KPNL…ALRL. N-linked (GlcNAc...) asparagine glycosylation is present at N182. N291 carries an N-linked (GlcNAc...) asparagine glycan. Residue N426 is glycosylated (N-linked (GlcNAc...) asparagine). An N-linked (GlcNAc...) asparagine glycan is attached at N468. A glycan (N-linked (GlcNAc...) asparagine) is linked at N505. N552 carries an N-linked (GlcNAc...) asparagine glycan. A glycan (N-linked (GlcNAc...) asparagine) is linked at N640. 4 disulfides stabilise this stretch: C682/C710, C684/C733, C757/C763, and C761/C776. 6 LRR repeats span residues 790–813, 814–837, 838–861, 863–885, 887–909, and 912–938; these read PMDS…AFIG, RKRL…TFYG, LLEL…EFQG, DNLQ…TFTH, YHLK…NFLP, and LNEL…YINR. N823 and N832 each carry an N-linked (GlcNAc...) asparagine glycan. An intrachain disulfide couples C924 to C950. Residues N956 and N1000 are each glycosylated (N-linked (GlcNAc...) asparagine). Residues 1022–1042 form a helical membrane-spanning segment; sequence ILVAILTAFIFVMICISLVFI. The Cytoplasmic segment spans residues 1043-1346; the sequence is FRQEMRVWCH…PTPASRNLHM (304 aa). Residues 1074–1209 enclose the TIR domain; it reads KLFDAFVSYS…LFWQKLRFAL (136 aa). The interval 1235–1346 is disordered; sequence HHHHHVHQQA…PTPASRNLHM (112 aa). Low complexity predominate over residues 1267–1300; that stretch reads PGSFRRQPSLHQQQQQQQQIRGNNNTTQQQQQQQ.

This sequence belongs to the Toll-like receptor family. May interact (via the extracellular domain) with 18w (via the extracellular domain).

Its subcellular location is the cell membrane. The protein resides in the apical cell membrane. Its function is as follows. Toll-related receptor. Probably specific to larval innate immunity. Involved in the tracheal immune response of larvae to Gram-negative and perhaps Gram-positive bacteria; upon infection it negatively regulates the immune deficiency (Imd) signaling cascade specifically in the respiratory epithelium to prevent the overexpression of antimicrobial peptides (AMP). Involved in the NF-kappa-B-dependent apoptosis of unfit cells during cell competition. Involved in neuron-specific glycosylation. Positively controls the neuromuscular junction (NMJ) growth in presynaptic motorneurons, probably via the JNK pathway. During development of the peripheral nervous system, may function in the NF-kappa-B (rel) regulatory cascade to repress expression of the neuron-specific genes sc and ase in non-neuronal cells. Promotes heterophilic cell adhesion with 18w in vitro. May have a minor role in leg development. May be involved in determining the proximal cell fate in the wing, possibly by negatively regulating the Dpp signaling pathway. May also be involved in the Dpp signaling pathway in the eye. Possibly functions with 18w and Toll-6 during convergent extension, to help direct proper planar cell polarity, cell intercalation and axis elongation. The polypeptide is Toll-like receptor Tollo (Drosophila melanogaster (Fruit fly)).